Reading from the N-terminus, the 184-residue chain is Photosystem I assembly protein Ycf4 (184 aa).

The next 2 helical transmembrane spans lie at 22-42 (FCWA…GIPS) and 64-84 (IVMC…WCTI).

Belongs to the Ycf4 family.

The protein resides in the plastid. It is found in the chloroplast thylakoid membrane. In terms of biological role, seems to be required for the assembly of the photosystem I complex. In Huperzia lucidula (Shining clubmoss), this protein is Photosystem I assembly protein Ycf4.